The chain runs to 59 residues: Large ribosomal subunit protein uL30 (59 aa).

The protein belongs to the universal ribosomal protein uL30 family. As to quaternary structure, part of the 50S ribosomal subunit.

The chain is Large ribosomal subunit protein uL30 from Brachyspira hyodysenteriae (strain ATCC 49526 / WA1).